The sequence spans 177 residues: Adenine phosphoribosyltransferase (177 aa).

The protein belongs to the purine/pyrimidine phosphoribosyltransferase family. In terms of assembly, homodimer.

It localises to the cytoplasm. It carries out the reaction AMP + diphosphate = 5-phospho-alpha-D-ribose 1-diphosphate + adenine. Its pathway is purine metabolism; AMP biosynthesis via salvage pathway; AMP from adenine: step 1/1. Its function is as follows. Catalyzes a salvage reaction resulting in the formation of AMP, that is energically less costly than de novo synthesis. The polypeptide is Adenine phosphoribosyltransferase (Synechococcus sp. (strain RCC307)).